Consider the following 149-residue polypeptide: Probable flagellum biosynthesis repressor protein FlbT (149 aa).

The protein belongs to the FlbT family.

Has a post-transcriptional repressor function in flagellum biogenesis. Associates with the 5'-UTR of fljK mRNA and promotes its degradation. The chain is Probable flagellum biosynthesis repressor protein FlbT from Agrobacterium fabrum (strain C58 / ATCC 33970) (Agrobacterium tumefaciens (strain C58)).